We begin with the raw amino-acid sequence, 362 residues long: Cobalt-precorrin-5B C(1)-methyltransferase (362 aa).

It belongs to the CbiD family.

It carries out the reaction Co-precorrin-5B + S-adenosyl-L-methionine = Co-precorrin-6A + S-adenosyl-L-homocysteine. It participates in cofactor biosynthesis; adenosylcobalamin biosynthesis; cob(II)yrinate a,c-diamide from sirohydrochlorin (anaerobic route): step 6/10. Catalyzes the methylation of C-1 in cobalt-precorrin-5B to form cobalt-precorrin-6A. This is Cobalt-precorrin-5B C(1)-methyltransferase from Desulfotalea psychrophila (strain LSv54 / DSM 12343).